Consider the following 1101-residue polypeptide: Rho guanine nucleotide exchange factor gef2 (1101 aa).

The tract at residues 203-222 (EDSRKKTSSPSPSFASSKDA) is disordered. Positions 210-219 (SSPSPSFASS) are enriched in low complexity. A DH domain is found at 230–428 (KKKSLLIEMM…KNIAEMPTVD (199 aa)). Phosphoserine is present on residues S736 and S977.

The protein resides in the cytoplasm. It is found in the cytoskeleton. It localises to the microtubule organizing center. Its subcellular location is the spindle pole body. In terms of biological role, has a role in the control of cell polarity and cytokinesis. Involved in bipolar growth and septum formation. This chain is Rho guanine nucleotide exchange factor gef2 (gef2), found in Schizosaccharomyces pombe (strain 972 / ATCC 24843) (Fission yeast).